A 264-amino-acid polypeptide reads, in one-letter code: H-2 class II histocompatibility antigen, E-Q beta chain (264 aa).

The first 26 residues, 1 to 26 (MVWLPRVPCVAAVILLLTVLSPPVAL), serve as a signal peptide directing secretion. A beta-1 region spans residues 27 to 121 (VRDSRPWFLE…IFDNFLVRRR (95 aa)). Over 27–225 (VRDSRPWFLE…KAQSTSAQNK (199 aa)) the chain is Extracellular. 2 disulfides stabilise this stretch: C38/C106 and C144/C200. The N-linked (GlcNAc...) asparagine glycan is linked to N46. The beta-2 stretch occupies residues 122-225 (VEPTVTVYPT…KAQSTSAQNK (104 aa)). The Ig-like C1-type domain occupies 124–214 (PTVTVYPTKT…PSLTDPVTVE (91 aa)). Residues 226–246 (MLSGVGGFVLGLLFLGAGLFI) form a helical membrane-spanning segment. The Cytoplasmic portion of the chain corresponds to 247–264 (YFRNQKGQSGLQPTGLLS).

It belongs to the MHC class II family.

The protein resides in the membrane. The protein is H-2 class II histocompatibility antigen, E-Q beta chain of Mus musculus (Mouse).